A 512-amino-acid chain; its full sequence is 2-isopropylmalate synthase (512 aa).

In terms of domain architecture, Pyruvate carboxyltransferase spans leucine 5–valine 268. Residues aspartate 14, histidine 202, histidine 204, and asparagine 239 each coordinate Mn(2+). The segment at alanine 394 to glycine 512 is regulatory domain.

Belongs to the alpha-IPM synthase/homocitrate synthase family. LeuA type 1 subfamily. In terms of assembly, homodimer. It depends on Mn(2+) as a cofactor.

It localises to the cytoplasm. The enzyme catalyses 3-methyl-2-oxobutanoate + acetyl-CoA + H2O = (2S)-2-isopropylmalate + CoA + H(+). Its pathway is amino-acid biosynthesis; L-leucine biosynthesis; L-leucine from 3-methyl-2-oxobutanoate: step 1/4. Its function is as follows. Catalyzes the condensation of the acetyl group of acetyl-CoA with 3-methyl-2-oxobutanoate (2-ketoisovalerate) to form 3-carboxy-3-hydroxy-4-methylpentanoate (2-isopropylmalate). This is 2-isopropylmalate synthase from Variovorax paradoxus (strain S110).